The following is a 338-amino-acid chain: Glycerol-3-phosphate dehydrogenase [NAD(P)+] (338 aa).

Residues serine 14, tyrosine 15, histidine 35, and lysine 109 each contribute to the NADPH site. 3 residues coordinate sn-glycerol 3-phosphate: lysine 109, glycine 138, and threonine 140. NADPH is bound at residue alanine 142. Residues lysine 194, aspartate 247, serine 257, arginine 258, and asparagine 259 each coordinate sn-glycerol 3-phosphate. Lysine 194 acts as the Proton acceptor in catalysis. NADPH is bound at residue arginine 258. NADPH is bound by residues valine 282 and glutamate 284.

This sequence belongs to the NAD-dependent glycerol-3-phosphate dehydrogenase family.

The protein resides in the cytoplasm. The catalysed reaction is sn-glycerol 3-phosphate + NAD(+) = dihydroxyacetone phosphate + NADH + H(+). It catalyses the reaction sn-glycerol 3-phosphate + NADP(+) = dihydroxyacetone phosphate + NADPH + H(+). Its pathway is membrane lipid metabolism; glycerophospholipid metabolism. Its function is as follows. Catalyzes the reduction of the glycolytic intermediate dihydroxyacetone phosphate (DHAP) to sn-glycerol 3-phosphate (G3P), the key precursor for phospholipid synthesis. The sequence is that of Glycerol-3-phosphate dehydrogenase [NAD(P)+] from Shewanella sp. (strain MR-4).